The sequence spans 164 residues: Phosphopantetheine adenylyltransferase (164 aa).

T9 is a substrate binding site. ATP contacts are provided by residues T9–F10 and H17. 3 residues coordinate substrate: K41, T76, and R90. ATP-binding positions include G91–R93, E101, and Y126–S132.

The protein belongs to the bacterial CoaD family. In terms of assembly, homohexamer. Mg(2+) serves as cofactor.

Its subcellular location is the cytoplasm. The enzyme catalyses (R)-4'-phosphopantetheine + ATP + H(+) = 3'-dephospho-CoA + diphosphate. It functions in the pathway cofactor biosynthesis; coenzyme A biosynthesis; CoA from (R)-pantothenate: step 4/5. Reversibly transfers an adenylyl group from ATP to 4'-phosphopantetheine, yielding dephospho-CoA (dPCoA) and pyrophosphate. This Coprothermobacter proteolyticus (strain ATCC 35245 / DSM 5265 / OCM 4 / BT) protein is Phosphopantetheine adenylyltransferase.